The sequence spans 1744 residues: Transcription initiation factor TFIID subunit 1 (1744 aa).

6 disordered regions span residues 1-65, 248-275, 429-488, 1001-1024, 1071-1098, and 1186-1213; these read MNNT…EKNE, VSIR…APNS, PEDR…DNDP, QNQT…DSDN, TTNQ…SQFG, and MKKN…PPNP. Over residues 43–52 the composition is skewed to polar residues; the sequence is ACSSASNGGS. Positions 55–64 are enriched in basic and acidic residues; that stretch reads VKMEPKVEKN. The segment covering 429-439 has biased composition (basic and acidic residues); it reads PEDRRHDEGPD. Over residues 440-449 the composition is skewed to basic residues; sequence HHHHHHHHRK. A compositionally biased stretch (polar residues) spans 477 to 488; that stretch reads ESTMAQFTDNDP. Positions 1012–1024 are enriched in acidic residues; the sequence is STDDDSTDADSDN. 3 coiled-coil regions span residues 1019 to 1080, 1161 to 1204, and 1282 to 1314; these read DADS…KGEK, YAQM…TEKK, and NFAE…RQMA. Composition is skewed to basic and acidic residues over residues 1076–1093 and 1186–1205; these read EKGE…EKKS and MKKN…EKKV. A compositionally biased stretch (gly residues) spans 1319–1344; sequence YGGGASSSGGAGGGGSGIGGSTGGGI. Residues 1319–1391 form a disordered region; the sequence is YGGGASSSGG…SKRRSSMMPE (73 aa). Over residues 1354-1363 the composition is skewed to polar residues; that stretch reads SQISGTSSFL. The segment covering 1372-1381 has biased composition (low complexity); it reads GGNRNSSVSG. The Nuclear localization signal signature appears at 1379–1386; that stretch reads VSGSKRRS. Bromo domains are found at residues 1404 to 1512 and 1537 to 1634; these read RARA…MIER and YLLG…VKDQ. The segment covering 1666 to 1694 has biased composition (acidic residues); that stretch reads DHMDEMEDHPTEEEEEDDDDEIMDDDMDI. 2 disordered regions span residues 1666–1702 and 1714–1744; these read DHMD…YSYD and NDLA…LDSF.

Belongs to the TAF1 family. In terms of assembly, component of the TFIID basal transcription factor complex, composed of TATA-box-binding protein tbp-1, and a number of TBP-associated factors (TAFs).

The protein resides in the nucleus. Its function is as follows. The TFIID basal transcription factor complex plays a major role in the initiation of RNA polymerase II (Pol II)-dependent transcription. TFIID recognizes and binds promoters via its subunit tbp-1, a TATA-box-binding protein, and promotes assembly of the pre-initiation complex (PIC). The TFIID complex consists of tbp-1 and TBP-associated factors (TAFs), including taf-1. May regulate RNA polymerase II activity and thereby may control transcription initiation by RNA polymerase II. Required for early embryonic development. Essential for embryonic transcription of several genes. This is Transcription initiation factor TFIID subunit 1 from Caenorhabditis elegans.